The sequence spans 116 residues: NADH-ubiquinone oxidoreductase chain 3 (116 aa).

The next 3 membrane-spanning stretches (helical) occupy residues 3–23 (LVIS…VVSF), 56–76 (FFLV…LLAL), and 85–105 (ATGT…GLIY).

Belongs to the complex I subunit 3 family.

It localises to the mitochondrion membrane. The enzyme catalyses a ubiquinone + NADH + 5 H(+)(in) = a ubiquinol + NAD(+) + 4 H(+)(out). Functionally, core subunit of the mitochondrial membrane respiratory chain NADH dehydrogenase (Complex I) that is believed to belong to the minimal assembly required for catalysis. Complex I functions in the transfer of electrons from NADH to the respiratory chain. The immediate electron acceptor for the enzyme is believed to be ubiquinone. This Formosania lacustris (Oriental stream loach) protein is NADH-ubiquinone oxidoreductase chain 3 (MT-ND3).